We begin with the raw amino-acid sequence, 445 residues long: rRNA methyltransferase 3B, mitochondrial (445 aa).

A mitochondrion-targeting transit peptide spans 1 to 37; sequence MATRIASMRFRCALFQSALTLGRNEVNIKRYVRRRRA. 2 disordered regions span residues 52 to 90 and 311 to 334; these read EGVI…SQPV and HSTT…SDYG. Composition is skewed to polar residues over residues 54–70, 78–90, and 311–324; these read VISQ…NDIT, IENP…SQPV, and HSTT…NTTP. 3 residues coordinate S-adenosyl-L-methionine: G387, I411, and L420.

This sequence belongs to the class IV-like SAM-binding methyltransferase superfamily. RNA methyltransferase TrmH family.

It localises to the mitochondrion. The enzyme catalyses a uridine in rRNA + S-adenosyl-L-methionine = a 2'-O-methyluridine in rRNA + S-adenosyl-L-homocysteine + H(+). In terms of biological role, S-adenosyl-L-methionine-dependent 2'-O-ribose methyltransferase that catalyzes the formation of 2'-O-methylguanosine at position 1485 (Gm1485) in the mitochondrial large subunit ribosomal RNA (mtLSU rRNA), a conserved modification in the peptidyl transferase domain of the mtLSU rRNA. Also required for formation of 2'-O-methyluridine at position 1484 (Um1484) mediated by MRM2. This is rRNA methyltransferase 3B, mitochondrial from Danio rerio (Zebrafish).